A 211-amino-acid chain; its full sequence is Uracil phosphoribosyltransferase (211 aa).

5-phospho-alpha-D-ribose 1-diphosphate-binding positions include arginine 81, arginine 106, and 133 to 141 (DPMLATGNS). Uracil-binding positions include isoleucine 196 and 201–203 (GDA). Aspartate 202 lines the 5-phospho-alpha-D-ribose 1-diphosphate pocket.

It belongs to the UPRTase family. It depends on Mg(2+) as a cofactor.

It catalyses the reaction UMP + diphosphate = 5-phospho-alpha-D-ribose 1-diphosphate + uracil. It functions in the pathway pyrimidine metabolism; UMP biosynthesis via salvage pathway; UMP from uracil: step 1/1. Allosterically activated by GTP. Catalyzes the conversion of uracil and 5-phospho-alpha-D-ribose 1-diphosphate (PRPP) to UMP and diphosphate. This chain is Uracil phosphoribosyltransferase, found in Myxococcus xanthus (strain DK1622).